Consider the following 297-residue polypeptide: Transmembrane protein 178A (297 aa).

Positions 1-25 are cleaved as a signal peptide; the sequence is MEPRALVTALSLGLSLCSLGLLVTA. The Extracellular portion of the chain corresponds to 26 to 179; the sequence is IFTDHWYETD…LLHLRRITAG (154 aa). Basic and acidic residues predominate over residues 41–57; the sequence is ESCERSRAGADPPDQKN. The interval 41 to 84 is disordered; it reads ESCERSRAGADPPDQKNRLMPLSHLPLRDSPPLGRRLLPGGPGR. Low complexity predominate over residues 68 to 79; that stretch reads RDSPPLGRRLLP. An N-linked (GlcNAc...) asparagine glycan is attached at Asn-158. A helical membrane pass occupies residues 180-200; the sequence is FLGMAVAVLLCGCIVATVSFF. Over 201–208 the chain is Cytoplasmic; that stretch reads WEESLTQH. Residues 209–229 form a helical membrane-spanning segment; sequence VAGLLFLMTGIFCTISLCTYA. Residues 230–257 lie on the Extracellular side of the membrane; sequence ASISYDLNRLPKLIYSLPADVEHGYSWS. Residues 258 to 278 traverse the membrane as a helical segment; that stretch reads IFCAWCSLGFIVAAGGLCIAY. Residues 279–297 lie on the Cytoplasmic side of the membrane; the sequence is PFISRTKIAQLKSGRDSTV.

This sequence belongs to the TMEM178 family. In terms of assembly, interacts with STIM1.

It localises to the endoplasmic reticulum membrane. Functionally, acts as a negative regulator of osteoclast differentiation in basal and inflammatory conditions by regulating TNFSF11-induced Ca (2+) fluxes, thereby controlling the induction of NFATC1. This is Transmembrane protein 178A (TMEM178A) from Homo sapiens (Human).